The following is a 460-amino-acid chain: MSIDIKFTINDILFNQESLQKKNKYTCPICFEFIYKKQIYQCKSGHHACKECWEKSLETKKECMTCKSVVNSYNDLSRCLMVERAFDKKECCCIYSFTEQIVQGGTNCSPPDGASDQNQRKLIKDEENGCKEKIEVDQIDSHLINCQYKFVTCSFKGCEKILRMNSLESHQNECGFKLVICDFCKRDDIKKKELETHYKTCPMVPIDCSQGCSVKIERKSIIDHIENDCCNTQIPCKYFEQGCKVEMKRSELQNHLERVNHQTYMGILIDKLTNQVGHSKKTHDELLKKIEDLSLLIIKFSDACLKKQVLPKALDICSNGYRNKWIISNYSSLAKSKLNCKSLSSPILLILSHHFQVCVYPKGDENKEYISLYLRVNNIEEPNSLKVEYSFTLVNVLDKSKSITKRVDKIVFISPKEWGWGKFLLSDLINKENGWLSNDDKLTIEIYIKILNEEYEPLES.

Residues 27–67 (CPICFEFIYKKQIYQCKSGHHACKECWEKSLETKKECMTCK) form an RING-type; degenerate zinc finger. 2 TRAF-type zinc fingers span residues 141-194 (SHLI…KKEL) and 196-253 (THYK…SELQ). An MATH domain is found at 320-448 (GYRNKWIISN…DDKLTIEIYI (129 aa)).

Belongs to the TNF receptor-associated factor family. A subfamily.

Its subcellular location is the cytoplasm. Probable adapter protein and signal transducer that links members of the tumor necrosis factor receptor family to different signaling pathways by association with the receptor cytoplasmic domain and kinases. This chain is TNF receptor-associated factor family protein DDB_G0290883, found in Dictyostelium discoideum (Social amoeba).